The chain runs to 349 residues: Thioredoxin reductase, mitochondrial (349 aa).

Residues 1-30 (MLLVRNSTLGRLSSLRGFFRNINESNIFYR) constitute a mitochondrion transit peptide. FAD contacts are provided by residues 41-44 (SGPA), 70-71 (IA), glutamine 75, asparagine 84, valine 117, cysteine 175, aspartate 318, and 325-327 (RQA). Residues cysteine 172 and cysteine 175 are joined by a disulfide bond.

It belongs to the class-II pyridine nucleotide-disulfide oxidoreductase family. As to quaternary structure, homodimer. Requires FAD as cofactor.

The protein resides in the mitochondrion. The enzyme catalyses [thioredoxin]-dithiol + NADP(+) = [thioredoxin]-disulfide + NADPH + H(+). This Kluyveromyces lactis (strain ATCC 8585 / CBS 2359 / DSM 70799 / NBRC 1267 / NRRL Y-1140 / WM37) (Yeast) protein is Thioredoxin reductase, mitochondrial (TRR1).